Here is a 119-residue protein sequence, read N- to C-terminus: Developmental pluripotency-associated protein 5B/5C (119 aa).

In terms of domain architecture, KH; atypical spans 24–86 (PEVFQVQSLV…SIKVRAKWLL (63 aa)).

Belongs to the KHDC1 family.

The protein resides in the cytoplasm. Functionally, involved in the maintenance of embryonic stem (ES) cell pluripotency. Dispensable for self-renewal of pluripotent ES cells and establishment of germ cells. Associates with specific target mRNAs. This Mus musculus (Mouse) protein is Developmental pluripotency-associated protein 5B/5C.